A 465-amino-acid chain; its full sequence is Dihydrolipoyllysine-residue acetyltransferase component 5 of pyruvate dehydrogenase complex, chloroplastic (465 aa).

The N-terminal 31 residues, 1 to 31, are a transit peptide targeting the chloroplast; sequence MSRLLQTPFLPSVSLPTKTRSSVTGFRVKPR. Residues 39–114 enclose the Lipoyl-binding domain; sequence IREIFMPALS…PVGSAIALLA (76 aa). Residue Lys80 is modified to N6-lipoyllysine. The interval 123-148 is disordered; the sequence is AKAKASGGGGGGDSKAPPASPPTAAV. A compositionally biased stretch (low complexity) spans 136-148; it reads SKAPPASPPTAAV. The Peripheral subunit-binding (PSBD) domain occupies 184 to 221; it reads VASPYAKKLAKELKVELAGLVGSGPMGRIVAKDVEAVA. His438 is a catalytic residue.

The protein belongs to the 2-oxoacid dehydrogenase family. It depends on (R)-lipoate as a cofactor.

The protein localises to the plastid. It localises to the chloroplast stroma. It catalyses the reaction N(6)-[(R)-dihydrolipoyl]-L-lysyl-[protein] + acetyl-CoA = N(6)-[(R)-S(8)-acetyldihydrolipoyl]-L-lysyl-[protein] + CoA. Its function is as follows. The pyruvate dehydrogenase complex catalyzes the overall conversion of pyruvate to acetyl-CoA and CO(2). It contains multiple copies of three enzymatic components: pyruvate dehydrogenase (E1), dihydrolipoamide acetyltransferase (E2) and lipoamide dehydrogenase (E3). The chain is Dihydrolipoyllysine-residue acetyltransferase component 5 of pyruvate dehydrogenase complex, chloroplastic (EMB3003) from Arabidopsis thaliana (Mouse-ear cress).